The sequence spans 636 residues: 1,4-alpha-glucan branching enzyme GlgB (636 aa).

The active-site Nucleophile is the Asp-309. The active-site Proton donor is the Glu-362.

Belongs to the glycosyl hydrolase 13 family. GlgB subfamily. In terms of assembly, monomer.

The enzyme catalyses Transfers a segment of a (1-&gt;4)-alpha-D-glucan chain to a primary hydroxy group in a similar glucan chain.. Its pathway is glycan biosynthesis; glycogen biosynthesis. Functionally, catalyzes the formation of the alpha-1,6-glucosidic linkages in glycogen by scission of a 1,4-alpha-linked oligosaccharide from growing alpha-1,4-glucan chains and the subsequent attachment of the oligosaccharide to the alpha-1,6 position. This is 1,4-alpha-glucan branching enzyme GlgB from Aromatoleum aromaticum (strain DSM 19018 / LMG 30748 / EbN1) (Azoarcus sp. (strain EbN1)).